Consider the following 529-residue polypeptide: Beta-hexosaminidase subunit alpha (529 aa).

Residues 1–22 (MAGSTLRFSLLLAAAFAGRATA) form the signal peptide. The propeptide occupies 23–88 (LWPWPQYIQT…RFPHPIEKRH (66 aa)). A disulfide bridge links Cys-58 with Cys-104. N-linked (GlcNAc...) asparagine glycans are attached at residues Asn-115, Asn-157, and Asn-295. Residues Cys-277 and Cys-328 are joined by a disulfide bond. Glu-323 acts as the Proton donor in catalysis. Residues 423–424 (NH) are critical for hydrolysis GM2 gangliosides. Cys-505 and Cys-522 are disulfide-bonded.

Belongs to the glycosyl hydrolase 20 family. In terms of assembly, there are 3 beta-hexosaminidase isozymes: isozyme A (hexosaminidase A) is a heterodimer composed of one subunit alpha and one subunit beta (chain A and B); isozyme B (hexosaminidase B) is a homodimer of two beta subunits (two chains A and B); isozyme S (hexosaminidase S) is a homodimer of two alpha subunits. The composition of the dimer (isozyme A versus isozyme S) has a significant effect on the substrate specificity of the alpha subunit active site.

It is found in the lysosome. The enzyme catalyses Hydrolysis of terminal non-reducing N-acetyl-D-hexosamine residues in N-acetyl-beta-D-hexosaminides.. It catalyses the reaction N-acetyl-beta-D-galactosaminyl-(1-&gt;4)-beta-D-3-sulfogalactosyl-(1-&gt;4)-beta-D-glucosyl-(1&lt;-&gt;1')-ceramide + H2O = a beta-D-3-sulfogalactosyl-(1-&gt;4)-beta-D-glucosyl-(1&lt;-&gt;1')-ceramide + N-acetyl-beta-D-galactosamine. It carries out the reaction a ganglioside GM2 (d18:1(4E)) + H2O = a ganglioside GM3 (d18:1(4E)) + N-acetyl-beta-D-galactosamine. The catalysed reaction is a ganglioside GM2 + H2O = a ganglioside GM3 + N-acetyl-beta-D-galactosamine. The enzyme catalyses beta-D-GalNAc-(1-&gt;4)-alpha-L-IdoA-(1-&gt;3)-beta-D-GalNAc-4-sulfate-(1-&gt;4)-alpha-L-IdoA-(1-&gt;3)-D-GalNAc-4-sulfate + H2O = alpha-L-IdoA-(1-&gt;3)-beta-D-GalNAc-4-sulfate-(1-&gt;4)-alpha-L-IdoA-(1-&gt;3)-D-GalNAc-4-sulfate + N-acetyl-D-galactosamine. It catalyses the reaction N-acetyl-beta-D-6-sulfogalactosaminyl-(1-&gt;4)-alpha-L-iduronyl-(1-&gt;3)-N-acetyl-D-6-sulfogalactosamine + H2O = alpha-L-iduronyl-(1-&gt;3)-N-acetyl-D-6-sulfogalactosamine + N-acetyl-D-6-sulfogalactosamine. With respect to regulation, addition of GM2A stimulates the hydrolysis of sulfated glycosphingolipid SM2 and the ganglioside GM2. Hydrolyzes the non-reducing end N-acetyl-D-hexosamine and/or sulfated N-acetyl-D-hexosamine of glycoconjugates, such as the oligosaccharide moieties from proteins and neutral glycolipids, or from certain mucopolysaccharides. The isozyme S is as active as the isozyme A on the anionic bis-sulfated glycans, the chondroitin-6-sulfate trisaccharide (C6S-3), and the dermatan sulfate pentasaccharide, and the sulfated glycosphingolipid SM2. The isozyme B does not hydrolyze each of these substrates, however hydrolyzes efficiently neutral oligosaccharide. Only the isozyme A is responsible for the degradation of GM2 gangliosides in the presence of GM2A. The sequence is that of Beta-hexosaminidase subunit alpha from Bos taurus (Bovine).